The sequence spans 285 residues: UPF0354 protein SA1564 (285 aa).

Belongs to the UPF0354 family.

This chain is UPF0354 protein SA1564, found in Staphylococcus aureus (strain N315).